The following is a 325-amino-acid chain: Lipoyl synthase (325 aa).

The interval methionine 1 to lysine 24 is disordered. Positions 54, 59, 65, 80, 84, 87, and 293 each coordinate [4Fe-4S] cluster. In terms of domain architecture, Radical SAM core spans tryptophan 66–leucine 282.

It belongs to the radical SAM superfamily. Lipoyl synthase family. [4Fe-4S] cluster serves as cofactor.

Its subcellular location is the cytoplasm. It catalyses the reaction [[Fe-S] cluster scaffold protein carrying a second [4Fe-4S](2+) cluster] + N(6)-octanoyl-L-lysyl-[protein] + 2 oxidized [2Fe-2S]-[ferredoxin] + 2 S-adenosyl-L-methionine + 4 H(+) = [[Fe-S] cluster scaffold protein] + N(6)-[(R)-dihydrolipoyl]-L-lysyl-[protein] + 4 Fe(3+) + 2 hydrogen sulfide + 2 5'-deoxyadenosine + 2 L-methionine + 2 reduced [2Fe-2S]-[ferredoxin]. The protein operates within protein modification; protein lipoylation via endogenous pathway; protein N(6)-(lipoyl)lysine from octanoyl-[acyl-carrier-protein]: step 2/2. Its function is as follows. Catalyzes the radical-mediated insertion of two sulfur atoms into the C-6 and C-8 positions of the octanoyl moiety bound to the lipoyl domains of lipoate-dependent enzymes, thereby converting the octanoylated domains into lipoylated derivatives. The protein is Lipoyl synthase of Rhodospirillum centenum (strain ATCC 51521 / SW).